Here is a 235-residue protein sequence, read N- to C-terminus: Pathogen-related protein (235 aa).

The protein is Pathogen-related protein of Hordeum vulgare (Barley).